A 133-amino-acid chain; its full sequence is Classical arabinogalactan protein 5 (133 aa).

The N-terminal stretch at 1 to 21 (MASKSVVVFLFLALVASSVVA) is a signal peptide. At Gln22 the chain carries Pyrrolidone carboxylic acid. The segment at 23 to 110 (APGPAPTISP…QSPLSGSPNA (88 aa)) is disordered. Positions 25–37 (GPAPTISPLPATP) are enriched in pro residues. Low complexity predominate over residues 38-48 (TPSQSPRATAP). A compositionally biased stretch (pro residues) spans 49–81 (APSPSANPPPSAPTTAPPVSQPPTESPPAPPTS). The GPI-anchor amidated asparagine moiety is linked to residue Asn109. A propeptide spans 110–133 (AAAVSRVSLVGTFAGVAVIAALLL) (removed in mature form).

Belongs to the classical AGP family. O-glycosylated on the hydroxyproline residues. Expressed at a low level in flowers and siliques.

The protein localises to the cell membrane. Its function is as follows. Proteoglycan that seems to be implicated in diverse developmental roles such as differentiation, cell-cell recognition, embryogenesis and programmed cell death. In Arabidopsis thaliana (Mouse-ear cress), this protein is Classical arabinogalactan protein 5 (AGP5).